Consider the following 129-residue polypeptide: NADH-quinone oxidoreductase subunit A (129 aa).

A run of 3 helical transmembrane segments spans residues 6-26 (FWPFILYAGMVLVLVALIVGF), 63-83 (LVAVLFVIFDMEAAFIFAWAV), and 89-109 (GWIGYGGALAFITILGVALIY).

Belongs to the complex I subunit 3 family. In terms of assembly, NDH-1 is composed of 14 different subunits. Subunits NuoA, H, J, K, L, M, N constitute the membrane sector of the complex.

Its subcellular location is the cell inner membrane. It carries out the reaction a quinone + NADH + 5 H(+)(in) = a quinol + NAD(+) + 4 H(+)(out). Functionally, NDH-1 shuttles electrons from NADH, via FMN and iron-sulfur (Fe-S) centers, to quinones in the respiratory chain. The immediate electron acceptor for the enzyme in this species is believed to be ubiquinone. Couples the redox reaction to proton translocation (for every two electrons transferred, four hydrogen ions are translocated across the cytoplasmic membrane), and thus conserves the redox energy in a proton gradient. The sequence is that of NADH-quinone oxidoreductase subunit A from Nitrosococcus oceani (strain ATCC 19707 / BCRC 17464 / JCM 30415 / NCIMB 11848 / C-107).